We begin with the raw amino-acid sequence, 531 residues long: Peptide chain release factor 3 (531 aa).

A tr-type G domain is found at 13–282; it reads AKRRTFAIIS…TLIKYAPPPK (270 aa). Residues 22–29, 90–94, and 144–147 contribute to the GTP site; these read SHPDAGKT, DTPGH, and NKLD.

The protein belongs to the TRAFAC class translation factor GTPase superfamily. Classic translation factor GTPase family. PrfC subfamily.

The protein resides in the cytoplasm. In terms of biological role, increases the formation of ribosomal termination complexes and stimulates activities of RF-1 and RF-2. It binds guanine nucleotides and has strong preference for UGA stop codons. It may interact directly with the ribosome. The stimulation of RF-1 and RF-2 is significantly reduced by GTP and GDP, but not by GMP. This is Peptide chain release factor 3 from Psychrobacter cryohalolentis (strain ATCC BAA-1226 / DSM 17306 / VKM B-2378 / K5).